Consider the following 168-residue polypeptide: G/U mismatch-specific DNA glycosylase (168 aa).

It belongs to the uracil-DNA glycosylase (UDG) superfamily. TDG/mug family. As to quaternary structure, binds DNA as a monomer.

It localises to the cytoplasm. It carries out the reaction Specifically hydrolyzes mismatched double-stranded DNA and polynucleotides, releasing free uracil.. In terms of biological role, excises ethenocytosine and uracil, which can arise by alkylation or deamination of cytosine, respectively, from the corresponding mispairs with guanine in ds-DNA. It is capable of hydrolyzing the carbon-nitrogen bond between the sugar-phosphate backbone of the DNA and the mispaired base. The complementary strand guanine functions in substrate recognition. Required for DNA damage lesion repair in stationary-phase cells. The sequence is that of G/U mismatch-specific DNA glycosylase from Citrobacter koseri (strain ATCC BAA-895 / CDC 4225-83 / SGSC4696).